Here is a 560-residue protein sequence, read N- to C-terminus: MKVWMAILISILCWQSSVWAVCPAWSPARAQEEISRLQQQIKQWDDDYWKEGKSEVEDGVYDQLSARLTQWQRCFGSEPRDVMMPPLNGAVMHPVAHTGVRKMVDKNALSLWMRERSDLWVQPKVDGVAVTLVYRDGKLNKAISRGNGLKGEDWTQKVSLISAVPQTVSGPLANSTLQGEIFLQREGHIQQQMGGINARAKVAGLMMRQGNSDTLNSLAVFVWAWPDGPQLMTDRLKELATAGFTLTQRYTRAVKNADEIARVRNEWWKAKLPFVTDGVVVRAAKEPESRHWLPGQAEWLVAWKYQPVAQVAEVKAIQFAVGKSGKISVVASLAPVMLDDKKVQRVNIGSVRRWQEWDIAPGDQILVSLAGQGIPRIDDVVWRGAERTKPTPPENRFNSLTCYFASDVCQEQFISRLVWLGSKQVLGLDGIGEAGWRALHQTHRFEHIFSWLLLTPEQLQNTPGIAKSKSAQLWHQFNLARKQPFTRWVMAMGIPLTRAALNASDERSWSQLLFSTEQFWQRLPGTGSGRARQVIEWKENAQIKKLGSWLAAQQITGFEP.

Catalysis depends on lysine 124, which acts as the N6-AMP-lysine intermediate.

It belongs to the NAD-dependent DNA ligase family. LigB subfamily.

It catalyses the reaction NAD(+) + (deoxyribonucleotide)n-3'-hydroxyl + 5'-phospho-(deoxyribonucleotide)m = (deoxyribonucleotide)n+m + AMP + beta-nicotinamide D-nucleotide.. Catalyzes the formation of phosphodiester linkages between 5'-phosphoryl and 3'-hydroxyl groups in double-stranded DNA using NAD as a coenzyme and as the energy source for the reaction. The chain is DNA ligase B from Shigella sonnei (strain Ss046).